The primary structure comprises 522 residues: BAR/IMD domain-containing adapter protein 2-like 2 (522 aa).

One can recognise an IMD domain in the interval 1–239 (MAPEMDQFYR…HSPGLLGPAL (239 aa)). Disordered regions lie at residues 220–325 (SEAS…GGGG) and 404–502 (PMSP…GTNP). Residues Ser-231, Ser-272, and Ser-303 each carry the phosphoserine modification. The segment covering 297–317 (RTPSASSLYASSTQRSRSNSF) has biased composition (polar residues). Residues 324–387 (GGARRVRALV…PEAYVKPVEE (64 aa)) form the SH3 domain. A compositionally biased stretch (low complexity) spans 443 to 456 (SQSRSRTPSRVPSR). Positions 457–466 (APSPAPPPLP) are enriched in pro residues. Residues Ser-472 and Ser-475 each carry the phosphoserine modification.

In terms of tissue distribution, expressed in the epithelial layer of the intestine and in the kidney.

The protein localises to the cell membrane. The protein resides in the cell junction. It is found in the cytoplasmic vesicle membrane. Its function is as follows. Phosphoinositides-binding protein that induces the formation of planar or gently curved membrane structures. Binds to phosphoinositides, including to phosphatidylinositol 4,5-bisphosphate (PtdIns(4,5)P2) headgroups. There seems to be no clear preference for a specific phosphoinositide. The polypeptide is BAR/IMD domain-containing adapter protein 2-like 2 (Baiap2l2) (Mus musculus (Mouse)).